Consider the following 167-residue polypeptide: Leptin (167 aa).

An N-terminal signal peptide occupies residues 1–21; the sequence is MHCVPLFCFLWFCHHLYYSQA. C117 and C167 are oxidised to a cystine.

It belongs to the leptin family.

The protein resides in the secreted. Key player in the regulation of energy balance and body weight control. Once released into the circulation, has central and peripheral effects by binding LEPR, found in many tissues, which results in the activation of several major signaling pathways. In the hypothalamus, acts as an appetite-regulating factor that induces a decrease in food intake and an increase in energy consumption by inducing anorexinogenic factors and suppressing orexigenic neuropeptides, also regulates bone mass and secretion of hypothalamo-pituitary-adrenal hormones. In the periphery, increases basal metabolism, influences reproductive function, regulates pancreatic beta-cell function and insulin secretion, is pro-angiogenic for endothelial cell and affects innate and adaptive immunity. In the arcuate nucleus of the hypothalamus, activates by depolarization POMC neurons inducing FOS and SOCS3 expression to release anorexigenic peptides and inhibits by hyperpolarization NPY neurons inducing SOCS3 with a consequent reduction on release of orexigenic peptides. In addition to its known satiety inducing effect, has a modulatory role in nutrient absorption. In the intestine, reduces glucose absorption by enterocytes by activating PKC and leading to a sequential activation of p38, PI3K and ERK signaling pathways which exerts an inhibitory effect on glucose absorption. Acts as a growth factor on certain tissues, through the activation of different signaling pathways increases expression of genes involved in cell cycle regulation such as CCND1, via JAK2-STAT3 pathway, or VEGFA, via MAPK1/3 and PI3K-AKT1 pathways. May also play an apoptotic role via JAK2-STAT3 pathway and up-regulation of BIRC5 expression. Pro-angiogenic, has mitogenic activity on vascular endothelial cells and plays a role in matrix remodeling by regulating the expression of matrix metalloproteinases (MMPs) and tissue inhibitors of metalloproteinases (TIMPs). In innate immunity, modulates the activity and function of neutrophils by increasing chemotaxis and the secretion of oxygen radicals. Increases phagocytosis by macrophages and enhances secretion of pro-inflammatory mediators. Increases cytotoxic ability of NK cells. Plays a pro-inflammatory role, in synergy with IL1B, by inducing NOS2 which promotes the production of IL6, IL8 and Prostaglandin E2, through a signaling pathway that involves JAK2, PI3K, MAP2K1/MEK1 and MAPK14/p38. In adaptive immunity, promotes the switch of memory T-cells towards T helper-1 cell immune responses. Increases CD4(+)CD25(-) T-cell proliferation and reduces autophagy during TCR (T-cell receptor) stimulation, through MTOR signaling pathway activation and BCL2 up-regulation. This Sminthopsis crassicaudata (Fat-tailed dunnart) protein is Leptin (LEP).